A 77-amino-acid chain; its full sequence is Putative regulatory protein tsl2331 (77 aa).

This sequence belongs to the RemA family.

The sequence is that of Putative regulatory protein tsl2331 from Thermosynechococcus vestitus (strain NIES-2133 / IAM M-273 / BP-1).